The sequence spans 586 residues: MGGAARDRGRKDAALPGAGLPPQQRRLGDGVYDTFMMIDETKGPPYSDTFSNPSEAPVSRRLNITTEPLTRGHTQHFVNGSEMKVEQLFQEFGNRRSNTLQSDGISNSEKSSPASQGKSSESLSAVKCNLSSRPSKVLPLTPEQALKQYKHHLTAYEKLEIVSYPEIYFVGPNAKKRQGVIGGPNNGGYDDADGAYIHVPRDHLAYRYEVLKIIGKGSFGQVARVYDHKLRQYVALKMVRNEKRFHRQAAEEIRILEHLKKQDKTGSMNVIHMLESFTFRNHVCMAFELLSIDLYELIKKNKFQGFSVQLVRKFAQSILQSLDALHKNKIIHCDLKPENILLKHHGRSATKVIDFGSSCFEYQKLYTYIQSRFYRAPEIILGCRYSTPIDIWSFGCILAELLTGQPLFPGEDEGDQLACMIELLGMPPQKLLEQSKRAKYFINSKGLPRYCSVSTQTDGRVVLLGGRSRRGKKRGPPGSKDWATALKGCGDYLFIEFLKRCLQWDPSARLTPAQALRHPWISKSTPKPLTMDKVPGKRVVNPTNAFQGLGSKLPPVVGIASKLKANLMSETSGSIPLCSVLPKLIS.

The span at 1-13 shows a compositional bias: basic and acidic residues; that stretch reads MGGAARDRGRKDA. The disordered stretch occupies residues 1-187; it reads MGGAARDRGR…QGVIGGPNNG (187 aa). One can recognise a Protein kinase domain in the interval 208-521; sequence YEVLKIIGKG…PAQALRHPWI (314 aa). Residues 214–222, K237, and 287–290 each bind ATP; these read IGKGSFGQV and FELL. D334 acts as the Proton acceptor in catalysis. The residue at position 368 (Y368) is a Phosphotyrosine. The short motif at 467–480 is the Nuclear localization signal element; that stretch reads RSRRGKKRGPPGSK.

It belongs to the protein kinase superfamily. CMGC Ser/Thr protein kinase family. MNB/DYRK subfamily. Interacts with SIRT1. Requires Mg(2+) as cofactor. Post-translationally, ubiquitinated at anaphase by the anaphase-promoting complex (APC/C), leading to its degradation by the proteasome. Protein kinase activity is activated following autophosphorylation at Tyr-368.

The protein resides in the nucleus. The protein localises to the cytoplasm. Its subcellular location is the nucleus speckle. It localises to the cytoplasmic granule. It is found in the cytoskeleton. The protein resides in the microtubule organizing center. The protein localises to the centrosome. The catalysed reaction is L-seryl-[protein] + ATP = O-phospho-L-seryl-[protein] + ADP + H(+). The enzyme catalyses L-threonyl-[protein] + ATP = O-phospho-L-threonyl-[protein] + ADP + H(+). It carries out the reaction L-tyrosyl-[protein] + ATP = O-phospho-L-tyrosyl-[protein] + ADP + H(+). Its activity is regulated as follows. Protein kinase activity is activated following autophosphorylation at Tyr-368. Dual-specificity protein kinase that promotes disassembly of several types of membraneless organelles during mitosis, such as stress granules, nuclear speckles and pericentriolar material. Dual-specificity tyrosine-regulated kinases (DYRKs) autophosphorylate a critical tyrosine residue in their activation loop and phosphorylate their substrate on serine and threonine residues. Acts as a central dissolvase of membraneless organelles during the G2-to-M transition, after the nuclear-envelope breakdown: acts by mediating phosphorylation of multiple serine and threonine residues in unstructured domains of proteins, such as SRRM1 and PCM1. Does not mediate disassembly of all membraneless organelles: disassembly of P-body and nucleolus is not regulated by DYRK3. Dissolution of membraneless organelles at the onset of mitosis is also required to release mitotic regulators, such as ZNF207, from liquid-unmixed organelles where they are sequestered and keep them dissolved during mitosis. Regulates mTORC1 by mediating the dissolution of stress granules: during stressful conditions, DYRK3 partitions from the cytosol to the stress granule, together with mTORC1 components, which prevents mTORC1 signaling. When stress signals are gone, the kinase activity of DYRK3 is required for the dissolution of stress granule and mTORC1 relocation to the cytosol: acts by mediating the phosphorylation of the mTORC1 inhibitor AKT1S1, allowing full reactivation of mTORC1 signaling. Also acts as a negative regulator of EPO-dependent erythropoiesis: may place an upper limit on red cell production during stress erythropoiesis. Inhibits cell death due to cytokine withdrawal in hematopoietic progenitor cells. Promotes cell survival upon genotoxic stress through phosphorylation of SIRT1: this in turn inhibits p53/TP53 activity and apoptosis. This chain is Dual specificity tyrosine-phosphorylation-regulated kinase 3, found in Mus musculus (Mouse).